Here is a 95-residue protein sequence, read N- to C-terminus: Putative defensin-like protein 262 (95 aa).

A signal peptide spans 1–26 (MEKTSLKLIFLFSLTVIAFCSSLGDA). Intrachain disulfides connect Cys-48/Cys-95, Cys-64/Cys-83, Cys-70/Cys-91, and Cys-74/Cys-93.

Belongs to the DEFL family.

The protein resides in the secreted. This is Putative defensin-like protein 262 from Arabidopsis thaliana (Mouse-ear cress).